A 212-amino-acid chain; its full sequence is Adenylate kinase (212 aa).

10–15 contacts ATP; sequence GAGKGT. The tract at residues 30 to 59 is NMP; sequence STGDMFRAAMANQTEMGRLAKSYIDKGELV. Residues threonine 31, arginine 36, 57–59, 86–89, and glutamine 93 each bind AMP; these read ELV and GYPR. An LID region spans residues 127-159; it reads GRIINRKTGETFHKVFNPPVDYKEEDYYQREDD. ATP-binding positions include arginine 128 and 137 to 138; that span reads TF. Arginine 156 and arginine 167 together coordinate AMP. Glutamine 195 lines the ATP pocket.

This sequence belongs to the adenylate kinase family. Monomer.

It localises to the cytoplasm. It carries out the reaction AMP + ATP = 2 ADP. The protein operates within purine metabolism; AMP biosynthesis via salvage pathway; AMP from ADP: step 1/1. Its function is as follows. Catalyzes the reversible transfer of the terminal phosphate group between ATP and AMP. Plays an important role in cellular energy homeostasis and in adenine nucleotide metabolism. The polypeptide is Adenylate kinase (Streptococcus pyogenes serotype M12 (strain MGAS2096)).